The following is a 281-amino-acid chain: Transmembrane protein 163 (281 aa).

Topologically, residues 1–80 (MEPLDTELCY…HEAQNYRKKA (80 aa)) are cytoplasmic. Residues 16 to 44 (IVQPSCNGQTPPGHRTLSPTQQMDHEQQM) are disordered. Residues 81–101 (LWVSWLSIAITLILAIAAFTV) form a helical membrane-spanning segment. At 102-108 (SVMRYSA) the chain is on the extracellular side. A helical membrane pass occupies residues 109–129 (SSFGFALDAVLDVLSSAIVLW). Topologically, residues 130 to 145 (RYSNAAAVHSAHREYM) are cytoplasmic. The chain crosses the membrane as a helical span at residues 146–166 (ACCILGVIFLLSSICIVSKAI). Residues 167–179 (HDLSIRVMPEVDG) are Extracellular-facing. A helical transmembrane segment spans residues 180–200 (FLFSVSILSGILCSLLAAIKF). At 201–209 (MLGKVLTSR) the chain is on the cytoplasmic side. A helical membrane pass occupies residues 210 to 230 (ALITDGFNSLVGGIMGFSILL). Residues 231-240 (SAEVYKHNSK) are Extracellular-facing. A helical transmembrane segment spans residues 241-261 (VWYLDGSVGILIGLIIMSYGI). Residues 262 to 281 (KLLMDMVPRVRQTRHYEMFE) lie on the Cytoplasmic side of the membrane.

It belongs to the TMEM163 family.

The protein resides in the cytoplasmic vesicle. The protein localises to the secretory vesicle. Its subcellular location is the synaptic vesicle membrane. It is found in the early endosome membrane. In terms of biological role, may bind zinc and other divalent cations and recruit them to vesicular organelles. The sequence is that of Transmembrane protein 163 (tmem163) from Xenopus laevis (African clawed frog).